We begin with the raw amino-acid sequence, 471 residues long: Glutamate--tRNA ligase (471 aa).

The short motif at 9 to 19 is the 'HIGH' region element; it reads PSPTGYLHVGG. Positions 98, 100, 125, and 127 each coordinate Zn(2+). Residues 237-241 carry the 'KMSKS' region motif; the sequence is KLSKR. Lys240 contributes to the ATP binding site.

Belongs to the class-I aminoacyl-tRNA synthetase family. Glutamate--tRNA ligase type 1 subfamily. In terms of assembly, monomer. Zn(2+) is required as a cofactor.

Its subcellular location is the cytoplasm. The enzyme catalyses tRNA(Glu) + L-glutamate + ATP = L-glutamyl-tRNA(Glu) + AMP + diphosphate. Catalyzes the attachment of glutamate to tRNA(Glu) in a two-step reaction: glutamate is first activated by ATP to form Glu-AMP and then transferred to the acceptor end of tRNA(Glu). In Salmonella enteritidis PT4 (strain P125109), this protein is Glutamate--tRNA ligase.